The primary structure comprises 453 residues: Probable glycine dehydrogenase (decarboxylating) subunit 1 (453 aa).

Belongs to the GcvP family. N-terminal subunit subfamily. As to quaternary structure, the glycine cleavage system is composed of four proteins: P, T, L and H. In this organism, the P 'protein' is a heterodimer of two subunits.

It catalyses the reaction N(6)-[(R)-lipoyl]-L-lysyl-[glycine-cleavage complex H protein] + glycine + H(+) = N(6)-[(R)-S(8)-aminomethyldihydrolipoyl]-L-lysyl-[glycine-cleavage complex H protein] + CO2. In terms of biological role, the glycine cleavage system catalyzes the degradation of glycine. The P protein binds the alpha-amino group of glycine through its pyridoxal phosphate cofactor; CO(2) is released and the remaining methylamine moiety is then transferred to the lipoamide cofactor of the H protein. This is Probable glycine dehydrogenase (decarboxylating) subunit 1 from Dictyoglomus turgidum (strain DSM 6724 / Z-1310).